The following is a 450-amino-acid chain: Deoxyguanosinetriphosphate triphosphohydrolase-like protein (450 aa).

The region spanning 61-201 (RLTHSLEVAQ…AKLAPELNAD (141 aa)) is the HD domain.

This sequence belongs to the dGTPase family. Type 2 subfamily.

This is Deoxyguanosinetriphosphate triphosphohydrolase-like protein from Pasteurella multocida (strain Pm70).